The sequence spans 168 residues: MAATAAASVAAISPLPGASLPRPVSARVPLLPRASPPTWRLSVGSARARSTRCLAAAGGGGLAPEMRATLDKVVGSHKVVLFMKGTKDFPQCGFSHTVVQILRSLDVPFETLDVLANEALRQGLKEYSSWPTFPQLYIDGEFFGGCDITVDAYKSGELQETLEKAMLS.

The N-terminal 54 residues, 1–54, are a transit peptide targeting the chloroplast; sequence MAATAAASVAAISPLPGASLPRPVSARVPLLPRASPPTWRLSVGSARARSTRCL. One can recognise a Glutaredoxin domain in the interval 67–168; the sequence is RATLDKVVGS…QETLEKAMLS (102 aa). Lys84 provides a ligand contact to glutathione. Cys92 lines the [2Fe-2S] cluster pocket. Glutathione contacts are provided by residues Arg121, Phe133, and 146 to 147; that span reads CD.

This sequence belongs to the glutaredoxin family. CGFS subfamily.

The protein resides in the plastid. It localises to the chloroplast. May only reduce GSH-thiol disulfides, but not protein disulfides. The protein is Monothiol glutaredoxin-S7, chloroplastic (GRXS7) of Oryza sativa subsp. japonica (Rice).